The chain runs to 478 residues: Probable serine carboxypeptidase CPVL (478 aa).

The signal sequence occupies residues methionine 1–glycine 22. N-linked (GlcNAc...) asparagine glycosylation is found at asparagine 83 and asparagine 134. The active site involves serine 206. N-linked (GlcNAc...) asparagine glycosylation is found at asparagine 309 and asparagine 350. Catalysis depends on residues aspartate 390 and histidine 450.

Belongs to the peptidase S10 family.

Functionally, may be involved in the digestion of phagocytosed particles in the lysosome, participation in an inflammatory protease cascade, and trimming of peptides for antigen presentation. The sequence is that of Probable serine carboxypeptidase CPVL (Cpvl) from Mus musculus (Mouse).